A 333-amino-acid chain; its full sequence is Nucleoid-associated protein HAPS_0704 (333 aa).

Belongs to the YejK family.

It is found in the cytoplasm. Its subcellular location is the nucleoid. In Glaesserella parasuis serovar 5 (strain SH0165) (Haemophilus parasuis), this protein is Nucleoid-associated protein HAPS_0704.